We begin with the raw amino-acid sequence, 489 residues long: MELNELQQQRLAKLERLRAAGIDPYPPRTRRTHTIGFVLASFDQLMERGEQVTVAGRIVGARRILGKLAFAHIEDESGRIQIWLSRGDIGDEWFDRFRDDLDTFDIVEATGTLRRTQRGEPSVFVERLGVLAKSLNPPPEKWHGLSDIEERHRQRYLDLIVNPEVRDVFRTRAKIVSTMRRFLDERGFLEVETPTLQPIYGGASARPFITHHNQLKQDLYLRIAVELYLKRLIVGGFERVYEISKVFRNEGVDRTHNPEFTMMECYQAYADYNDMMRLVEDLYRTLALEVAGSTTIVFQGHTIDFGPAWQRVSIPTAIAARTGIDILELTELEPLQRAIRAVGLKVDLKPSWGKQVDEIFSVYVQPELIQPTFVIDHPVALSPLAKRRPDQPLLVERFEPIVAGMEVGNAFTELNDPLDQEQRFLEQGRAYDAGDDEAQQMDIDFLNALMYGMPPTGGLGIGIDRTVMLFTDQPSIREVILFPHMRPRD.

Mg(2+) contacts are provided by glutamate 399 and glutamate 406.

It belongs to the class-II aminoacyl-tRNA synthetase family. In terms of assembly, homodimer. Mg(2+) is required as a cofactor.

Its subcellular location is the cytoplasm. The catalysed reaction is tRNA(Lys) + L-lysine + ATP = L-lysyl-tRNA(Lys) + AMP + diphosphate. The protein is Lysine--tRNA ligase of Roseiflexus sp. (strain RS-1).